We begin with the raw amino-acid sequence, 485 residues long: Zinc finger protein 639 (485 aa).

Residues 1–14 are compositionally biased toward basic residues; it reads MNEYPKKRKRKTLH. Disordered stretches follow at residues 1 to 23 and 54 to 80; these read MNEYPKKRKRKTLHPSRYSDSSG and DNKDDDSDPETANDLPKFADGTKARNR. Phosphoserine is present on serine 60. Residue lysine 76 forms a Glycyl lysine isopeptide (Lys-Gly) (interchain with G-Cter in SUMO2) linkage. Serine 88 is subject to Phosphoserine. The disordered stretch occupies residues 115 to 136; sequence ASPESVHQHTQEESPIEVHTSE. Glycyl lysine isopeptide (Lys-Gly) (interchain with G-Cter in SUMO2) cross-links involve residues lysine 177, lysine 181, and lysine 226. C2H2-type zinc fingers lie at residues 204–227, 233–255, 260–283, 289–311, 374–397, 403–425, 431–454, and 460–482; these read YKCELCEFNSKYFSDLKQHVILKH, NVCRVCKESFSTNMLLIEHAKLH, YICKYCDYKTVIFENLSQHIADTH, YWCEQCDVQFSSSSELYLHFQEH, FVCQVCGFRSRLHTNVNRHVAIEH, HVCDDCGKGFSSMLEYCKHLNSH, YLCQYCEYSTGQIDDLKIHLDFKH, and HKCSECLMRFGNERDLLGHLQVH. An interaction with CTNNA2 region spans residues 371 to 455; it reads KNFFVCQVCG…LKIHLDFKHS (85 aa).

It belongs to the krueppel C2H2-type zinc-finger protein family. Interacts with CTNNA2.

Its subcellular location is the nucleus. Binds DNA and may function as a transcriptional repressor. The protein is Zinc finger protein 639 (Znf639) of Mus musculus (Mouse).